An 886-amino-acid chain; its full sequence is Adhesion G protein-coupled receptor E1 (886 aa).

The first 20 residues, 1-20, serve as a signal peptide directing secretion; the sequence is MRGFNLLLFWGCCVMHSWEG. Topologically, residues 21 to 599 are extracellular; it reads HIRPTRKPNT…IMASGELTMD (579 aa). The EGF-like 1 domain maps to 31-79; that stretch reads KGNNCRDSTLCPAYATCTNTVDSYYCACKQGFLSSNGQNHFKDPGVRCK. Intrachain disulfides connect C35/C47, C41/C56, C58/C78, C84/C97, C91/C106, C108/C130, C136/C148, C142/C157, C159/C170, C176/C188, C182/C197, C199/C219, C225/C235, C229/C244, C246/C266, C272/C285, C279/C294, and C296/C315. Residues 80-131 enclose the EGF-like 2; calcium-binding domain; the sequence is DIDECSQSPQPCGPNSSCKNLSGRYKCSCLDGFSSPTGNDWVPGKPGNFSCT. Residues N94, N99, and N127 are each glycosylated (N-linked (GlcNAc...) asparagine). Positions 132-171 constitute an EGF-like 3; calcium-binding domain; the sequence is DINECLTSSVCPEHSDCVNSMGSYSCSCQVGFISRNSTCE. Residue N167 is glycosylated (N-linked (GlcNAc...) asparagine). Positions 172–220 constitute an EGF-like 4; calcium-binding domain; it reads DVDECADPRACPEHATCNNTVGNYSCFCNPGFESSSGHLSFQGLKASCE. N-linked (GlcNAc...) asparagine glycans are attached at residues N189 and N194. In terms of domain architecture, EGF-like 5; calcium-binding spans 221–267; that stretch reads DIDECTEMCPINSTCTNTPGSYFCTCHPGFAPSNGQLNFTDQGVECR. N-linked (GlcNAc...) asparagine glycosylation is found at N232 and N258. In terms of domain architecture, EGF-like 6; calcium-binding spans 268–316; it reads DIDECRQDPSTCGPNSICTNALGSYSCGCIAGFHPNPEGSQKDGNFSCQ. N-linked (GlcNAc...) asparagine glycosylation is found at N312, N366, N375, and N448. The GAIN-B domain occupies 431–597; that stretch reads EYLDIESKVI…AVIMASGELT (167 aa). 2 disulfide bridges follow: C550-C579 and C567-C581. Positions 550–597 are GPS; that stretch reads CVSWSTDVKGGRWTSFGCVILEASETYTICSCNQMANLAVIMASGELT. Residues 600–627 traverse the membrane as a helical segment; that stretch reads FSLYIISHVGIIISLVCLVLAIATFLLC. At 628-634 the chain is on the cytoplasmic side; that stretch reads RSIRNHN. Residues 635-656 traverse the membrane as a helical segment; sequence TYLHLHLCVCLLLAKTLFLAGI. Over 657 to 666 the chain is Extracellular; sequence HKTDNKMGCA. The helical transmembrane segment at 667 to 690 threads the bilayer; it reads IIAGFLHYLFLACFFWMLVEAVIL. Topologically, residues 691–709 are cytoplasmic; the sequence is FLMVRNLKVVNYFSSRNIK. Residues 710–731 traverse the membrane as a helical segment; it reads MLHICAFGYGLPMLVVVISASV. Over 732–747 the chain is Extracellular; that stretch reads QPQGYGMHNRCWLNTE. Residues 748–776 form a helical membrane-spanning segment; sequence TGFIWSFLGPVCTVIVINSLLLTWTLWIL. Residues 777-794 are Cytoplasmic-facing; it reads RQRLSSVNAEVSTLKDTR. A helical transmembrane segment spans residues 795–814; sequence LLTFKAFAQLFILGCSWVLG. At 815–829 the chain is on the extracellular side; the sequence is IFQIGPVAGVMAYLF. A helical transmembrane segment spans residues 830-852; sequence TIINSLQGAFIFLIHCLLNGQVR. Topologically, residues 853 to 886 are cytoplasmic; sequence EEYKRWITGKTKPSSQSQTSRILLSSMPSASKTG. Positions 862–886 are disordered; it reads KTKPSSQSQTSRILLSSMPSASKTG. A compositionally biased stretch (polar residues) spans 863–886; it reads TKPSSQSQTSRILLSSMPSASKTG.

The protein belongs to the G-protein coupled receptor 2 family. Adhesion G-protein coupled receptor (ADGR) subfamily. Expression is restricted to eosinophils.

The protein resides in the cell membrane. In terms of biological role, orphan receptor involved in cell adhesion and probably in cell-cell interactions specifically involving cells of the immune system. May play a role in regulatory T-cells (Treg) development. In Homo sapiens (Human), this protein is Adhesion G protein-coupled receptor E1.